We begin with the raw amino-acid sequence, 125 residues long: Small ribosomal subunit protein uS13 (125 aa).

The interval 93 to 125 (RSLPVRGQRTRTNARTRKGKRKTVAGKKKAGKK) is disordered.

Belongs to the universal ribosomal protein uS13 family. As to quaternary structure, part of the 30S ribosomal subunit. Forms a loose heterodimer with protein S19. Forms two bridges to the 50S subunit in the 70S ribosome.

Functionally, located at the top of the head of the 30S subunit, it contacts several helices of the 16S rRNA. In the 70S ribosome it contacts the 23S rRNA (bridge B1a) and protein L5 of the 50S subunit (bridge B1b), connecting the 2 subunits; these bridges are implicated in subunit movement. Contacts the tRNAs in the A and P-sites. This chain is Small ribosomal subunit protein uS13, found in Chlorobaculum tepidum (strain ATCC 49652 / DSM 12025 / NBRC 103806 / TLS) (Chlorobium tepidum).